A 150-amino-acid chain; its full sequence is Putative transmembrane protein DDB_G0277665 (150 aa).

2 helical membrane-spanning segments follow: residues 4-24 and 42-62; these read TLIIIIVSVIVGYLISHFNIL and VIVGAIVGQALIYFFVFFLPL.

The protein resides in the membrane. The protein is Putative transmembrane protein DDB_G0277665 of Dictyostelium discoideum (Social amoeba).